The following is a 512-amino-acid chain: NAD(P)H-quinone oxidoreductase chain 4, chloroplastic (512 aa).

14 consecutive transmembrane segments (helical) span residues 4–24, 34–54, 87–107, 111–131, 134–154, 167–187, 208–228, 242–262, 274–294, 308–328, 330–350, 374–396, 417–437, and 462–482; these read VPWLTAIVLFPVSAGLLIPLL, WYALGICLLDLILMTYVFGCY, IGLILLTGFVTTLATLAAWPV, PKLFYFLMLAMYSGQLGLFAS, ILLFFVMWELELIPVYLLLSM, FILYTAGGSIFLLAGLLTASL, GLEILIYLGFLIAYAVKLPAF, HYSTCMLLAGILLKMGGYGFI, TVFAPWLVALGAYQIVYAALV, SSVSHMGFVLVGAGSLSDLGL, GAMLQMISHGLIGASLFFLAG, MFAMFTTCAMASLALPGMSGFVS, IITLIEAVGIILTPIYLLSMV, and VFVLGSLLLPMIGIGIYPNFA.

It belongs to the complex I subunit 4 family.

It is found in the plastid. The protein resides in the chloroplast thylakoid membrane. It carries out the reaction a plastoquinone + NADH + (n+1) H(+)(in) = a plastoquinol + NAD(+) + n H(+)(out). It catalyses the reaction a plastoquinone + NADPH + (n+1) H(+)(in) = a plastoquinol + NADP(+) + n H(+)(out). This chain is NAD(P)H-quinone oxidoreductase chain 4, chloroplastic, found in Zygnema circumcarinatum (Green alga).